The primary structure comprises 212 residues: MECVIGVVGRDFAVVAADTSAVQSILVHKTDEDKVMVLDSHKLMGASGEPGDRVQFTEFIQKNLHLYQFRNNIPLSTAATANFTRGELATALRKNPYYVNVLLAGYDSDVGASLYYIDYIATFHKIEKGAFGYGSYFCLSLMDKLYRPDMSVEEAVDLVDKCIKEIRLRLVVAPQNFIIKIVDKEGAREYARRAYTDSPPEAATSEAATVAA.

The protein belongs to the peptidase T1B family. As to quaternary structure, the 26S proteasome consists of a 20S proteasome core and two 19S regulatory subunits. The 20S proteasome core is composed of 28 subunits that are arranged in four stacked rings, resulting in a barrel-shaped structure. The two end rings are each formed by seven alpha subunits, and the two central rings are each formed by seven beta subunits. The catalytic chamber with the active sites is on the inside of the barrel.

The protein localises to the cytoplasm. It localises to the nucleus. Non-catalytic component of the proteasome, a multicatalytic proteinase complex which is characterized by its ability to cleave peptides with Arg, Phe, Tyr, Leu, and Glu adjacent to the leaving group at neutral or slightly basic pH. The proteasome has an ATP-dependent proteolytic activity. The chain is Proteasome subunit beta type-2 (PBD1) from Oryza sativa subsp. japonica (Rice).